The sequence spans 177 residues: Peptidyl-prolyl cis-trans isomerase H (177 aa).

Ala2 carries the post-translational modification N-acetylalanine. One can recognise a PPIase cyclophilin-type domain in the interval 14–176; that stretch reads FFDVSIGGQE…LPVVISQCGE (163 aa).

This sequence belongs to the cyclophilin-type PPIase family. PPIase H subfamily. As to quaternary structure, interacts directly with PRPF4. Part of a heteromeric complex containing PPIH, PRPF3 and PRPF4 that is stable in the absence of RNA. Component of the U4/U6-U5 tri-snRNP complex composed of the U4, U6 and U5 snRNAs and at least PRPF3, PRPF4, PRPF6, PRPF8, PRPF31, SNRNP200, TXNL4A, SNRNP40, DDX23, CD2BP2, PPIH, SNU13, EFTUD2, SART1 and USP39. Heterodimer with PRPF18.

It is found in the nucleus speckle. The protein localises to the cytoplasm. The catalysed reaction is [protein]-peptidylproline (omega=180) = [protein]-peptidylproline (omega=0). With respect to regulation, inhibited by cyclosporin A. Functionally, PPIase that catalyzes the cis-trans isomerization of proline imidic peptide bonds in oligopeptides and may therefore assist protein folding. Participates in pre-mRNA splicing. May play a role in the assembly of the U4/U5/U6 tri-snRNP complex, one of the building blocks of the spliceosome. May act as a chaperone. The protein is Peptidyl-prolyl cis-trans isomerase H (PPIH) of Homo sapiens (Human).